The sequence spans 151 residues: FAD synthase (151 aa).

ATP is bound by residues 9–10 (TF), 14–17 (HPGH), D96, and Y123.

Belongs to the archaeal FAD synthase family. Homodimer. A divalent metal cation serves as cofactor.

The catalysed reaction is FMN + ATP + H(+) = FAD + diphosphate. It functions in the pathway cofactor biosynthesis; FAD biosynthesis; FAD from FMN: step 1/1. In terms of biological role, catalyzes the transfer of the AMP portion of ATP to flavin mononucleotide (FMN) to produce flavin adenine dinucleotide (FAD) coenzyme. In Methanothermobacter thermautotrophicus (strain ATCC 29096 / DSM 1053 / JCM 10044 / NBRC 100330 / Delta H) (Methanobacterium thermoautotrophicum), this protein is FAD synthase.